We begin with the raw amino-acid sequence, 340 residues long: Peroxisomal adenine nucleotide transporter 1 (340 aa).

Solcar repeat units lie at residues 4–119 (ENAV…VRKH), 133–218 (FSTP…LREA), and 236–320 (LSPG…LTKM). The next 6 helical transmembrane spans lie at 6–26 (AVIGATASSLANIAVYPLDLA), 96–116 (GSSTVAGFIQSFSYFFWYTLV), 139–159 (LVLGIVAAATSQLFVNPINVV), 190–210 (GFWAGLKVSLVLTVNPSITYA), 242–262 (FVMGVLSKIVSTVLTQPLIIA), and 293–313 (WKGLGPQITKGVLVQGLLFMF).

It belongs to the mitochondrial carrier (TC 2.A.29) family.

The protein resides in the peroxisome membrane. Functionally, adenine nucleotide transporter involved in the uniport of ATP and adenine nucleotide hetero-exchange transport between the cytosol and the peroxisomal lumen. This transport is accompanied by a proton transport from the peroxisomal lumen to the cytosol. Transport of ATP into the peroxisome is required for beta-oxidation of medium-chain fatty acids. This Eremothecium gossypii (strain ATCC 10895 / CBS 109.51 / FGSC 9923 / NRRL Y-1056) (Yeast) protein is Peroxisomal adenine nucleotide transporter 1 (ANT1).